Reading from the N-terminus, the 75-residue chain is Tautomerase PptA (75 aa).

Pro2 acts as the Proton acceptor; via imino nitrogen in catalysis.

This sequence belongs to the 4-oxalocrotonate tautomerase family. PptA subfamily. Homodimer.

Its subcellular location is the cytoplasm. The sequence is that of Tautomerase PptA from Shigella sonnei (strain Ss046).